The sequence spans 622 residues: Cilia- and flagella-associated protein 206 (622 aa).

The interval 571–592 (QVYPPKDTSTQSMREDSTGVPR) is disordered.

It belongs to the CFAP206 family.

The protein resides in the cytoplasm. It localises to the cytoskeleton. The protein localises to the cilium axoneme. Its subcellular location is the cilium basal body. Essential for sperm motility and is involved in the regulation of the beating frequency of motile cilia on the epithelial cells of the respiratory tract. Required for the establishment of radial spokes in sperm flagella. The polypeptide is Cilia- and flagella-associated protein 206 (Macaca fascicularis (Crab-eating macaque)).